We begin with the raw amino-acid sequence, 661 residues long: L-type lectin-domain containing receptor kinase V.5 (661 aa).

A signal peptide spans 1–25 (MSRELIILCQPILVLFLTLFYNSHG). Topologically, residues 26 to 282 (YFVSQGSVGI…KTSNRTKTVL (257 aa)) are extracellular. Residues 30–250 (QGSVGIGFNG…GAIHYLMGWL (221 aa)) form a legume-lectin like region. N-linked (GlcNAc...) asparagine glycans are attached at residues N45, N64, N116, N198, and N276. The helical transmembrane segment at 283-303 (AVCLTVSVFAAFVASWIGFVF) threads the bilayer. Residues 304-661 (YLRHKKVKEV…TDSSFVSHGR (358 aa)) lie on the Cytoplasmic side of the membrane. The Protein kinase domain occupies 338 to 596 (FKEKQLLGKG…LGVLCSHQAA (259 aa)). ATP contacts are provided by residues 344 to 352 (LGKGGFGQV) and K367. The active-site Proton acceptor is D464.

This sequence in the C-terminal section; belongs to the protein kinase superfamily. Ser/Thr protein kinase family. The protein in the N-terminal section; belongs to the leguminous lectin family. Autophosphorylated on a Ser residue. As to expression, expressed at low levels in stems, leaves, flowers and siliques.

The protein resides in the cell membrane. The enzyme catalyses L-seryl-[protein] + ATP = O-phospho-L-seryl-[protein] + ADP + H(+). It carries out the reaction L-threonyl-[protein] + ATP = O-phospho-L-threonyl-[protein] + ADP + H(+). Confers resistance to the pathogenic oomycetes Phytophthora infestans and Phytophthora capsici, but confers susceptibility to the pathogenic bacteria Pseudomonas syringae. The polypeptide is L-type lectin-domain containing receptor kinase V.5 (Arabidopsis thaliana (Mouse-ear cress)).